A 196-amino-acid chain; its full sequence is Putative manganese efflux pump MntP (196 aa).

Helical transmembrane passes span 3–23 (PASLILLAFAMSTDAFAASIG), 39–59 (IGAVFGVVEAIMPLLGWALGH), 67–87 (GVDHWIAFVMLALLGGHMIWA), 109–129 (IWLIAFTALATSIDAMAVGIT), 137–157 (IIAASVAIGLATALMVTLGTL), and 172–192 (ILGGLILIGIGIAVLYEHLAG).

The protein belongs to the MntP (TC 9.B.29) family.

It is found in the cell inner membrane. In terms of biological role, probably functions as a manganese efflux pump. The protein is Putative manganese efflux pump MntP of Chromohalobacter salexigens (strain ATCC BAA-138 / DSM 3043 / CIP 106854 / NCIMB 13768 / 1H11).